We begin with the raw amino-acid sequence, 298 residues long: Lipoyl synthase 1 (298 aa).

C34, C39, C45, C60, C64, C67, and S274 together coordinate [4Fe-4S] cluster. A Radical SAM core domain is found at 46–263 (FYQGTATFLM…RRLGESMGFL (218 aa)).

Belongs to the radical SAM superfamily. Lipoyl synthase family. [4Fe-4S] cluster is required as a cofactor.

It is found in the cytoplasm. It carries out the reaction [[Fe-S] cluster scaffold protein carrying a second [4Fe-4S](2+) cluster] + N(6)-octanoyl-L-lysyl-[protein] + 2 oxidized [2Fe-2S]-[ferredoxin] + 2 S-adenosyl-L-methionine + 4 H(+) = [[Fe-S] cluster scaffold protein] + N(6)-[(R)-dihydrolipoyl]-L-lysyl-[protein] + 4 Fe(3+) + 2 hydrogen sulfide + 2 5'-deoxyadenosine + 2 L-methionine + 2 reduced [2Fe-2S]-[ferredoxin]. It participates in protein modification; protein lipoylation via endogenous pathway; protein N(6)-(lipoyl)lysine from octanoyl-[acyl-carrier-protein]: step 2/2. Its function is as follows. Catalyzes the radical-mediated insertion of two sulfur atoms into the C-6 and C-8 positions of the octanoyl moiety bound to the lipoyl domains of lipoate-dependent enzymes, thereby converting the octanoylated domains into lipoylated derivatives. This is Lipoyl synthase 1 from Thermosynechococcus vestitus (strain NIES-2133 / IAM M-273 / BP-1).